The sequence spans 121 residues: NAD(P)H-quinone oxidoreductase subunit M (121 aa).

Belongs to the complex I NdhM subunit family. In terms of assembly, NDH-1 can be composed of about 15 different subunits; different subcomplexes with different compositions have been identified which probably have different functions.

The protein localises to the cellular thylakoid membrane. It carries out the reaction a plastoquinone + NADH + (n+1) H(+)(in) = a plastoquinol + NAD(+) + n H(+)(out). The catalysed reaction is a plastoquinone + NADPH + (n+1) H(+)(in) = a plastoquinol + NADP(+) + n H(+)(out). Its function is as follows. NDH-1 shuttles electrons from an unknown electron donor, via FMN and iron-sulfur (Fe-S) centers, to quinones in the respiratory and/or the photosynthetic chain. The immediate electron acceptor for the enzyme in this species is believed to be plastoquinone. Couples the redox reaction to proton translocation, and thus conserves the redox energy in a proton gradient. Cyanobacterial NDH-1 also plays a role in inorganic carbon-concentration. The protein is NAD(P)H-quinone oxidoreductase subunit M of Nostoc punctiforme (strain ATCC 29133 / PCC 73102).